A 158-amino-acid chain; its full sequence is Cytochrome c-type biogenesis protein CcmE (158 aa).

Topologically, residues 1–7 are cytoplasmic; sequence MKPRHRR. A helical; Signal-anchor for type II membrane protein transmembrane segment spans residues 8 to 28; that stretch reads LTLIALVLGGLGLSAGLALTA. Residues 29–158 lie on the Periplasmic side of the membrane; that stretch reads FQDNLVFFFT…DGHPETTTAY (130 aa). Heme contacts are provided by His123 and Tyr127. The interval 138-158 is disordered; it reads RIGQGNGTPGPDGHPETTTAY.

The protein belongs to the CcmE/CycJ family.

The protein resides in the cell inner membrane. Heme chaperone required for the biogenesis of c-type cytochromes. Transiently binds heme delivered by CcmC and transfers the heme to apo-cytochromes in a process facilitated by CcmF and CcmH. This chain is Cytochrome c-type biogenesis protein CcmE, found in Alkalilimnicola ehrlichii (strain ATCC BAA-1101 / DSM 17681 / MLHE-1).